The primary structure comprises 560 residues: Glycolate permease GlcA (560 aa).

Topologically, residues 1–13 (MVTWTQMYMPMGG) are cytoplasmic. The chain crosses the membrane as a helical span at residues 14-34 (LGLSALVALIPIIFFFVALAV). Topologically, residues 35-41 (LRLKGHV) are periplasmic. Residues 42–62 (AGAITLILSILIAIFAFKMPI) form a helical membrane-spanning segment. Over 63 to 69 (DMAFAAA) the chain is Cytoplasmic. Residues 70–90 (GYGFIYGLWPIAWIIVAAVFL) traverse the membrane as a helical segment. Over 91-130 (YKLTVASGQFDIIRSSVISITDDQRLQVLLIGFSFGALLE) the chain is Periplasmic. A helical transmembrane segment spans residues 131–151 (GAAGFGAPVAITGALLVGLGF). At 152–158 (KPLYAAG) the chain is on the cytoplasmic side. The chain crosses the membrane as a helical span at residues 159–179 (LCLIANTAPVAFGALGVPILV). Over 180 to 199 (AGQVTGIDPFHIGAMAGRQL) the chain is Periplasmic. The chain crosses the membrane as a helical span at residues 200-220 (PFLSVLVPFWLVAMMDGWKGV). Over 221-225 (KETWP) the chain is Cytoplasmic. A helical transmembrane segment spans residues 226–246 (AALVAGGSFAVTQFFTSNYIG). Residues 247–248 (PE) lie on the Periplasmic side of the membrane. Residues 249–269 (LPDITSALVSIVSLALFLKVW) form a helical membrane-spanning segment. Topologically, residues 270–313 (RPKNTETAISMGQSAGAMVVNKPSSGGPVPSEYSLGQIIRAWSP) are cytoplasmic. Residues 314-334 (FLILTVLVTIWTMKPFKALFA) form a helical membrane-spanning segment. Residues 335 to 378 (PGGAFYSLVINFQIPHLHQQVLKAAPIVAQPTPMDAVFKFDPLS) lie on the Periplasmic side of the membrane. A helical membrane pass occupies residues 379–399 (AGGTAIFIAAIISIFILGVGI). Over 400-408 (KKGIGVFAE) the chain is Cytoplasmic. Residues 409-429 (TLISLKWPILSIGMVLAFAFV) form a helical membrane-spanning segment. The Periplasmic segment spans residues 430–438 (TNYSGMSTT). Residues 439–459 (LALVLAGTGVMFPFFSPFLGW) form a helical membrane-spanning segment. The Cytoplasmic portion of the chain corresponds to 460–536 (LGVFLTGSDT…ELFRYTVKHS (77 aa)). A helical transmembrane segment spans residues 537–557 (LIFASVIGIITLLQAYVFTGM). Topologically, residues 558–560 (LVS) are periplasmic.

The protein belongs to the lactate permease family.

The protein resides in the cell inner membrane. The catalysed reaction is glycolate(in) + H(+)(in) = glycolate(out) + H(+)(out). The enzyme catalyses (S)-lactate(in) + H(+)(in) = (S)-lactate(out) + H(+)(out). It catalyses the reaction (R)-lactate(in) + H(+)(in) = (R)-lactate(out) + H(+)(out). Its activity is regulated as follows. Inhibited by the proton ionophore carbonyl cyanide m-chlorophenylhydrazone (CCCP). Its function is as follows. Uptake of glycolate across the membrane. Can also transport L-lactate and D-lactate. Seems to be driven by a proton motive force. The chain is Glycolate permease GlcA from Escherichia coli (strain K12).